Reading from the N-terminus, the 421-residue chain is Glutamate-1-semialdehyde 2,1-aminomutase 1 (421 aa).

Lysine 258 carries the post-translational modification N6-(pyridoxal phosphate)lysine.

The protein belongs to the class-III pyridoxal-phosphate-dependent aminotransferase family. HemL subfamily. It depends on pyridoxal 5'-phosphate as a cofactor.

The protein resides in the cytoplasm. The enzyme catalyses (S)-4-amino-5-oxopentanoate = 5-aminolevulinate. It participates in porphyrin-containing compound metabolism; protoporphyrin-IX biosynthesis; 5-aminolevulinate from L-glutamyl-tRNA(Glu): step 2/2. This is Glutamate-1-semialdehyde 2,1-aminomutase 1 from Cenarchaeum symbiosum (strain A).